The sequence spans 52 residues: MKVKIGLKCSDCEDINYSTTKNAKTNTEKLELKKFCPRENKHTLHKEIKLKS.

It belongs to the bacterial ribosomal protein bL33 family.

The chain is Large ribosomal subunit protein bL33 from Helicobacter pylori (strain HPAG1).